Here is a 403-residue protein sequence, read N- to C-terminus: Guanine nucleotide-binding protein alpha-8 subunit (403 aa).

A lipid anchor (N-myristoyl glycine) is attached at G2. A lipid anchor (S-palmitoyl cysteine) is attached at C3. The region spanning 31-356 (LDFRILLLGA…KVLMKATKDL (326 aa)) is the G-alpha domain. A G1 motif region spans residues 34–47 (RILLLGAGESGKST). GTP is bound by residues 39 to 46 (GAGESGKS), 174 to 180 (IMTRVRT), 199 to 203 (DVGGQ), 268 to 271 (NKKD), and A324. Mg(2+) is bound by residues S46 and T180. A G2 motif region spans residues 172-180 (DCIMTRVRT). Positions 195 to 204 (FRVVDVGGQR) are G3 motif. The segment at 264-271 (FLVLNKKD) is G4 motif. Residues 322–327 (IAARYK) form a G5 motif region. A disordered region spans residues 353–403 (TKDLKKSSKQSSKSSLGNSTQNNSNNNNNNNNSNNNNGQTTIDGATAKINS). The segment covering 374-389 (NNSNNNNNNNNSNNNN) has biased composition (low complexity). Positions 390-403 (GQTTIDGATAKINS) are enriched in polar residues.

This sequence belongs to the G-alpha family. In terms of assembly, g proteins are composed of 3 units; alpha, beta and gamma. The alpha chain contains the guanine nucleotide binding site.

Functionally, guanine nucleotide-binding proteins (G proteins) are involved as modulators or transducers in various transmembrane signaling systems. G alpha-8 is a potential analog for the G(s)-like G-proteins which stimulate adenylate cyclase in mammals. This chain is Guanine nucleotide-binding protein alpha-8 subunit (gpaH), found in Dictyostelium discoideum (Social amoeba).